The chain runs to 179 residues: ATP synthase subunit delta (179 aa).

It belongs to the ATPase delta chain family. As to quaternary structure, F-type ATPases have 2 components, F(1) - the catalytic core - and F(0) - the membrane proton channel. F(1) has five subunits: alpha(3), beta(3), gamma(1), delta(1), epsilon(1). F(0) has three main subunits: a(1), b(2) and c(10-14). The alpha and beta chains form an alternating ring which encloses part of the gamma chain. F(1) is attached to F(0) by a central stalk formed by the gamma and epsilon chains, while a peripheral stalk is formed by the delta and b chains.

The protein localises to the cell membrane. F(1)F(0) ATP synthase produces ATP from ADP in the presence of a proton or sodium gradient. F-type ATPases consist of two structural domains, F(1) containing the extramembraneous catalytic core and F(0) containing the membrane proton channel, linked together by a central stalk and a peripheral stalk. During catalysis, ATP synthesis in the catalytic domain of F(1) is coupled via a rotary mechanism of the central stalk subunits to proton translocation. Its function is as follows. This protein is part of the stalk that links CF(0) to CF(1). It either transmits conformational changes from CF(0) to CF(1) or is implicated in proton conduction. This is ATP synthase subunit delta from Staphylococcus saprophyticus subsp. saprophyticus (strain ATCC 15305 / DSM 20229 / NCIMB 8711 / NCTC 7292 / S-41).